Consider the following 463-residue polypeptide: Argininosuccinate lyase (463 aa).

It belongs to the lyase 1 family. Argininosuccinate lyase subfamily.

The protein resides in the cytoplasm. It catalyses the reaction 2-(N(omega)-L-arginino)succinate = fumarate + L-arginine. It functions in the pathway amino-acid biosynthesis; L-arginine biosynthesis; L-arginine from L-ornithine and carbamoyl phosphate: step 3/3. The chain is Argininosuccinate lyase from Prochlorococcus marinus (strain NATL1A).